A 408-amino-acid polypeptide reads, in one-letter code: MTSHTLNELIAEGVRGRYILVRSDLNVPLDGSTVTDDGRIKASLPVLAKLTDAGARVLVTAHLGRPKGAPEDKYSLRPAVDRLAELAGFKVTLAADTVGDSAREAAASLQDGEALVLENVRFDARETSKDDAERGAFADELVALTGANGAYVDDAFGAVHRKHASVYDVASRLPSYQGDLVHTEVEVLRKLTADTQRPYVVVLGGSKVSDKLAVIDNLIGKADTILVGGGMLFTFLAAAGHKVAASLLEQDQIGVVQDYLKRAADAGTEFVIPTDVVVAEKFAADAAHETVAADAIEASSFGANGIGLDIGPDSAAAFADRIKGARTVFWNGPMGVFEFEAFSAGTRAIAQALTETEAFTVVGGGDSAAAVRTLGFADDQFGHISTGGGASLEYLEGKELPGLSILDR.

Substrate contacts are provided by residues 24 to 26 (DLN), Arg-39, 62 to 65 (HLGR), Arg-121, and Arg-161. ATP-binding positions include Lys-211, Gly-307, Glu-338, and 364 to 367 (GGDS).

It belongs to the phosphoglycerate kinase family. Monomer.

The protein localises to the cytoplasm. It catalyses the reaction (2R)-3-phosphoglycerate + ATP = (2R)-3-phospho-glyceroyl phosphate + ADP. Its pathway is carbohydrate degradation; glycolysis; pyruvate from D-glyceraldehyde 3-phosphate: step 2/5. This is Phosphoglycerate kinase from Pseudarthrobacter chlorophenolicus (strain ATCC 700700 / DSM 12829 / CIP 107037 / JCM 12360 / KCTC 9906 / NCIMB 13794 / A6) (Arthrobacter chlorophenolicus).